Reading from the N-terminus, the 395-residue chain is Transcription termination/antitermination protein NusA (395 aa).

In terms of domain architecture, S1 motif spans 137–201; that stretch reads NSVLMGQVIL…TKKGLLLELS (65 aa). KH domains are found at residues 243–291 and 331–378; these read SHNS…TLAL and KVRL…NENE.

This sequence belongs to the NusA family. Monomer. Binds directly to the core enzyme of the DNA-dependent RNA polymerase and to nascent RNA.

Its subcellular location is the cytoplasm. Its function is as follows. Participates in both transcription termination and antitermination. The polypeptide is Transcription termination/antitermination protein NusA (Helicobacter pylori (strain J99 / ATCC 700824) (Campylobacter pylori J99)).